The sequence spans 433 residues: MFTRLITTSALTGAIALTIGSQAFAQTELAWWHGMTGANNEMVNELSKEFNESQSEYKIVPVYKGNYPETLNAGIAAFRSKQPPAILQVFDAGSGVMMAAEGAIVPAAEVLEKGGYKFDKSQYLPGIVAYYSKPDGTMLSFPYNSSSPILYYNKDAFKKAGLDENKPPKTWPEVFEAAKKIKASGASPCGFTSTWLTWIQTENFAAWNNVPYGTNENGLAGTDVKLEINSPLYVEHFQAIADLAKDGTFRYGGRTSEAKQLFTSGECAMLTESSGGLGDVVKSGINYGIGQLPYYEGHGPQNTIPGGASLWVFAGLSDDQYKGIAEFFNFLSQTKIQVKLHEKSGYLPVTLAAYEETKKSDFYEKNPGRETPILQMMGKEPTENSKGVRLVNLPQVRDILNEEFEAMLGGKQDAKTALDNAVKRGNAAIAAAQ.

The N-terminal stretch at 1 to 25 (MFTRLITTSALTGAIALTIGSQAFA) is a signal peptide. Sn-glycerol 3-phosphate-binding residues include Tyr67, Asp91, Ser146, Ser273, Gly307, Tyr346, and Arg397.

Belongs to the bacterial solute-binding protein 1 family. In terms of assembly, the complex is composed of two ATP-binding proteins (UgpC), two transmembrane proteins (UgpA and UgpE) and a solute-binding protein (UgpB).

The protein localises to the periplasm. Part of the ABC transporter complex UgpBAEC involved in sn-glycerol-3-phosphate (G3P) import. Binds G3P. In Brucella suis biovar 1 (strain 1330), this protein is sn-glycerol-3-phosphate-binding periplasmic protein UgpB (ugpB).